The following is a 178-amino-acid chain: NADH-quinone oxidoreductase subunit I 2 (178 aa).

2 4Fe-4S ferredoxin-type domains span residues 46–78 (IVLT…MQAA) and 88–117 (AWFR…LTPF). Residues Cys58, Cys61, Cys64, Cys68, Cys97, Cys100, Cys103, and Cys107 each coordinate [4Fe-4S] cluster.

The protein belongs to the complex I 23 kDa subunit family. As to quaternary structure, NDH-1 is composed of 14 different subunits. Subunits NuoA, H, J, K, L, M, N constitute the membrane sector of the complex. It depends on [4Fe-4S] cluster as a cofactor.

It localises to the cell inner membrane. The catalysed reaction is a quinone + NADH + 5 H(+)(in) = a quinol + NAD(+) + 4 H(+)(out). Its function is as follows. NDH-1 shuttles electrons from NADH, via FMN and iron-sulfur (Fe-S) centers, to quinones in the respiratory chain. The immediate electron acceptor for the enzyme in this species is believed to be ubiquinone. Couples the redox reaction to proton translocation (for every two electrons transferred, four hydrogen ions are translocated across the cytoplasmic membrane), and thus conserves the redox energy in a proton gradient. The chain is NADH-quinone oxidoreductase subunit I 2 from Syntrophobacter fumaroxidans (strain DSM 10017 / MPOB).